Reading from the N-terminus, the 26-residue chain is Mu-theraphotoxin-Phlo2a (26 aa).

3 disulfides stabilise this stretch: cysteine 2/cysteine 16, cysteine 9/cysteine 21, and cysteine 15/cysteine 25.

It belongs to the neurotoxin 30 (phrixotoxin) family. In terms of tissue distribution, expressed by the venom gland.

It localises to the secreted. Gating-modifier toxin that non-selectively inhibits voltage-gated sodium channel Nav by shifting the threshold for channel activation to more positive potentials. This toxin moderately inhibits human Nav1.2/SCN2A (IC(50)=404 nM), Nav1.5/SCN5A (IC(50)=218 nM) and Nav1.7/SCN9A (IC(50)=333 nM). Inhibition of Nav1.7 is voltage-dependent, with lower inhibition at more positive test pulses. The protein is Mu-theraphotoxin-Phlo2a of Phlogius sp. (Tarantula spider).